The chain runs to 213 residues: Glutathione S-transferase DHAR1, mitochondrial (213 aa).

Residues Lys8 and Asp19 each coordinate glutathione. Positions 8 and 19 each coordinate L-ascorbate. The region spanning 10–83 (AVGAPDHLGD…DVIVGILEEK (74 aa)) is the GST N-terminal domain. The active-site Nucleophile is Cys20. At Cys20 the chain carries S-glutathionyl cysteine. Residues 20–25 (CPFSQR) carry the Glutathione-binding motif. 3 residues coordinate glutathione: Lys47, Val60, and Ser73. In terms of domain architecture, GST C-terminal spans 84–213 (YPDPPLKTPA…ISGWAPKVNP (130 aa)). Positions 133–137 (HLKSH) match the Copper-binding motif. His160 and Trp207 together coordinate glutathione. Lys210 contacts L-ascorbate.

The protein belongs to the GST superfamily. DHAR family. Monomer. Interacts with copper (Cu). Post-translationally, spontaneous S-glutathionylation in the presence of oxidized glutathione (GSSG). In terms of tissue distribution, expressed at least in roots and leaves.

It is found in the mitochondrion. Its subcellular location is the cytoplasm. The protein localises to the cytosol. The protein resides in the peroxisome. It localises to the membrane. It carries out the reaction RX + glutathione = an S-substituted glutathione + a halide anion + H(+). It catalyses the reaction L-dehydroascorbate + 2 glutathione = glutathione disulfide + L-ascorbate. In terms of biological role, displays a dual function. As a soluble protein, exhibits glutathione-dependent thiol transferase and dehydroascorbate (DHA) reductase activities. Key component of the ascorbate recycling system. Involved in the redox homeostasis, especially in scavenging of ROS under oxidative stresses, subsequently to biotic or abiotic inducers. As a peripheral membrane protein, could also function as voltage-gated ion channel. The protein is Glutathione S-transferase DHAR1, mitochondrial of Arabidopsis thaliana (Mouse-ear cress).